The sequence spans 109 residues: T cell receptor alpha variable 27 (109 aa).

The signal sequence occupies residues 1–19; sequence MVLKFSVSILWIQLAWVST. The 90-residue stretch at 20–109 folds into the Ig-like domain; that stretch reads QLLEQSPQFL…GDTGLYLCAG (90 aa). Asparagine 36 and asparagine 42 each carry an N-linked (GlcNAc...) asparagine glycan. An intrachain disulfide couples cysteine 41 to cysteine 107.

As to quaternary structure, alpha-beta TR is a heterodimer composed of an alpha and beta chain; disulfide-linked. The alpha-beta TR is associated with the transmembrane signaling CD3 coreceptor proteins to form the TR-CD3 (TcR or TCR). The assembly of alpha-beta TR heterodimers with CD3 occurs in the endoplasmic reticulum where a single alpha-beta TR heterodimer associates with one CD3D-CD3E heterodimer, one CD3G-CD3E heterodimer and one CD247 homodimer forming a stable octameric structure. CD3D-CD3E and CD3G-CD3E heterodimers preferentially associate with TR alpha and TR beta chains, respectively. The association of the CD247 homodimer is the last step of TcR assembly in the endoplasmic reticulum and is required for transport to the cell surface. In terms of assembly, (Microbial infection) Interacts with Staphylococcus aureus enterotoxin H/entH.

It is found in the cell membrane. V region of the variable domain of T cell receptor (TR) alpha chain that participates in the antigen recognition. Alpha-beta T cell receptors are antigen specific receptors which are essential to the immune response and are present on the cell surface of T lymphocytes. Recognize peptide-major histocompatibility (MH) (pMH) complexes that are displayed by antigen presenting cells (APC), a prerequisite for efficient T cell adaptive immunity against pathogens. Binding of alpha-beta TR to pMH complex initiates TR-CD3 clustering on the cell surface and intracellular activation of LCK that phosphorylates the ITAM motifs of CD3G, CD3D, CD3E and CD247 enabling the recruitment of ZAP70. In turn, ZAP70 phosphorylates LAT, which recruits numerous signaling molecules to form the LAT signalosome. The LAT signalosome propagates signal branching to three major signaling pathways, the calcium, the mitogen-activated protein kinase (MAPK) kinase and the nuclear factor NF-kappa-B (NF-kB) pathways, leading to the mobilization of transcription factors that are critical for gene expression and essential for T cell growth and differentiation. The T cell repertoire is generated in the thymus, by V-(D)-J rearrangement. This repertoire is then shaped by intrathymic selection events to generate a peripheral T cell pool of self-MH restricted, non-autoaggressive T cells. Post-thymic interaction of alpha-beta TR with the pMH complexes shapes TR structural and functional avidity. This Homo sapiens (Human) protein is T cell receptor alpha variable 27.